The primary structure comprises 281 residues: Probable endonuclease 4 (281 aa).

Positions 69, 109, 145, 179, 182, 216, 229, 231, and 261 each coordinate Zn(2+).

This sequence belongs to the AP endonuclease 2 family. Zn(2+) is required as a cofactor.

It catalyses the reaction Endonucleolytic cleavage to 5'-phosphooligonucleotide end-products.. Functionally, endonuclease IV plays a role in DNA repair. It cleaves phosphodiester bonds at apurinic or apyrimidinic (AP) sites, generating a 3'-hydroxyl group and a 5'-terminal sugar phosphate. The sequence is that of Probable endonuclease 4 from Pectobacterium atrosepticum (strain SCRI 1043 / ATCC BAA-672) (Erwinia carotovora subsp. atroseptica).